Consider the following 262-residue polypeptide: Ribosomal RNA small subunit methyltransferase A (262 aa).

S-adenosyl-L-methionine contacts are provided by H16, L18, G43, E64, D89, and N109.

It belongs to the class I-like SAM-binding methyltransferase superfamily. rRNA adenine N(6)-methyltransferase family. RsmA subfamily.

It is found in the cytoplasm. The enzyme catalyses adenosine(1518)/adenosine(1519) in 16S rRNA + 4 S-adenosyl-L-methionine = N(6)-dimethyladenosine(1518)/N(6)-dimethyladenosine(1519) in 16S rRNA + 4 S-adenosyl-L-homocysteine + 4 H(+). In terms of biological role, specifically dimethylates two adjacent adenosines (A1518 and A1519) in the loop of a conserved hairpin near the 3'-end of 16S rRNA in the 30S particle. May play a critical role in biogenesis of 30S subunits. In Xanthomonas axonopodis pv. citri (strain 306), this protein is Ribosomal RNA small subunit methyltransferase A.